The primary structure comprises 423 residues: N-acylneuraminate cytidylyltransferase B (423 aa).

R30, N40, R88, S97, S99, and Q120 together coordinate substrate. R178 is a catalytic residue.

Belongs to the CMP-NeuNAc synthase family. As to quaternary structure, homotetramer.

It localises to the cytoplasm. The enzyme catalyses an N-acylneuraminate + CTP = a CMP-N-acyl-beta-neuraminate + diphosphate. Its pathway is amino-sugar metabolism; N-acetylneuraminate metabolism. Its function is as follows. Catalyzes the activation of 2-keto-3-deoxy-D-glycero-D-galacto-nononic acid (KDN) to cytidine 5'-monophosphate 2-keto-3-deoxy-D-glycero-D-galacto-nononic acid (CMP-KDN), a substrate required for the addition of sialic acid. Also has weak activity towards N-acetylneuraminic acid (NeuNAc) and N-glycolylneuraminic acid (Neu5Gc). The chain is N-acylneuraminate cytidylyltransferase B from Danio rerio (Zebrafish).